We begin with the raw amino-acid sequence, 732 residues long: Photosystem I P700 chlorophyll a apoprotein A1 (732 aa).

A run of 8 helical transmembrane segments spans residues 61 to 84 (VFSS…FHGA), 145 to 168 (LKYA…FHMH), 185 to 209 (NAGQ…HIAL), 278 to 296 (IASH…GIIA), 317 to 340 (WHSR…HHIY), 356 to 382 (LSLF…IFMI), 414 to 436 (IIMG…IYIH), and 510 to 528 (FMVH…LILM). 2 residues coordinate [4Fe-4S] cluster: Cys552 and Cys561. Helical transmembrane passes span 568 to 589 (HVFL…HFFW) and 644 to 666 (LSGY…MFLW). His655 contacts chlorophyll a'. Chlorophyll a-binding residues include Met663 and Tyr671. Position 672 (Trp672) interacts with phylloquinone. The helical transmembrane segment at 704 to 724 (AVGLVHYMLGGIGTTWAFFLA) threads the bilayer.

It belongs to the PsaA/PsaB family. The PsaA/B heterodimer binds the P700 chlorophyll special pair and subsequent electron acceptors. PSI consists of a core antenna complex that captures photons, and an electron transfer chain that converts photonic excitation into a charge separation. The eukaryotic PSI reaction center is composed of at least 11 subunits. P700 is a chlorophyll a/chlorophyll a' dimer, A0 is one or more chlorophyll a, A1 is one or both phylloquinones and FX is a shared 4Fe-4S iron-sulfur center. serves as cofactor.

The protein localises to the plastid. The protein resides in the chloroplast thylakoid membrane. The catalysed reaction is reduced [plastocyanin] + hnu + oxidized [2Fe-2S]-[ferredoxin] = oxidized [plastocyanin] + reduced [2Fe-2S]-[ferredoxin]. PsaA and PsaB bind P700, the primary electron donor of photosystem I (PSI), as well as the electron acceptors A0, A1 and FX. PSI is a plastocyanin/cytochrome c6-ferredoxin oxidoreductase, converting photonic excitation into a charge separation, which transfers an electron from the donor P700 chlorophyll pair to the spectroscopically characterized acceptors A0, A1, FX, FA and FB in turn. Oxidized P700 is reduced on the lumenal side of the thylakoid membrane by plastocyanin or cytochrome c6. The protein is Photosystem I P700 chlorophyll a apoprotein A1 of Heterocapsa triquetra (Dinoflagellate).